The following is a 381-amino-acid chain: Outer membrane protein assembly factor BamB (381 aa).

The signal sequence occupies residues 1–22 (MNLLKRYAAPVACAAAVLVFAA). A lipid anchor (N-palmitoyl cysteine) is attached at C23. A lipid anchor (S-diacylglycerol cysteine) is attached at C23.

Belongs to the BamB family. As to quaternary structure, part of the Bam complex.

It is found in the cell outer membrane. Part of the outer membrane protein assembly complex, which is involved in assembly and insertion of beta-barrel proteins into the outer membrane. This chain is Outer membrane protein assembly factor BamB, found in Burkholderia pseudomallei (strain K96243).